Reading from the N-terminus, the 1385-residue chain is Contactin-associated protein 1 (1385 aa).

A signal peptide spans 1–20 (MMSLRLFSILLATVVSGAWG). Residues 21 to 1284 (WGYYGCNEEL…PYYHDDGWIA (1264 aa)) lie on the Extracellular side of the membrane. The F5/8 type C domain maps to 26–169 (CNEELVGPLY…IGLRLGIYGC (144 aa)). Cysteines 26 and 169 form a disulfide. 3 N-linked (GlcNAc...) asparagine glycosylation sites follow: asparagine 121, asparagine 129, and asparagine 277. Laminin G-like domains lie at 204–356 (FKTE…AFRC) and 390–539 (FRTW…FDTC). Cysteine 324 and cysteine 356 form a disulfide bridge. Asparagine 421, asparagine 500, and asparagine 519 each carry an N-linked (GlcNAc...) asparagine glycan. 4 disulfide bridges follow: cysteine 507-cysteine 539, cysteine 545-cysteine 556, cysteine 550-cysteine 565, and cysteine 567-cysteine 577. An EGF-like 1 domain is found at 545 to 577 (CSPNMCEHDGRCYQSWDDFICYCELTGYKGVTC). A Fibrinogen C-terminal domain is found at 577–796 (CHEPLYKESC…NTISFHTGAA (220 aa)). Asparagine 598, asparagine 654, asparagine 665, asparagine 764, asparagine 805, asparagine 844, asparagine 861, asparagine 949, and asparagine 957 each carry an N-linked (GlcNAc...) asparagine glycan. Residues 814–958 (FRTSAPSGVF…NASEGTFPNC (145 aa)) form the Laminin G-like 3 domain. 4 disulfide bridges follow: cysteine 931–cysteine 958, cysteine 962–cysteine 975, cysteine 969–cysteine 984, and cysteine 986–cysteine 996. One can recognise an EGF-like 2 domain in the interval 962–996 (CTHPRFPCFHGGRCVERYSYYTCDCDLTAFDGPYC). N-linked (GlcNAc...) asparagine glycosylation is found at asparagine 1079 and asparagine 1148. The 163-residue stretch at 1089–1251 (FSTNSAPAVL…VQGELSESNC (163 aa)) folds into the Laminin G-like 4 domain. A disulfide bond links cysteine 1210 and cysteine 1251. The chain crosses the membrane as a helical span at residues 1285-1305 (ILLGFLVAFLLLGLVGMLVLF). The Cytoplasmic segment spans residues 1306–1385 (YLQNHRYKGS…PQILEESRSE (80 aa)). The segment at 1317–1385 (HTNEPKATHD…PQILEESRSE (69 aa)) is disordered. The span at 1319–1329 (NEPKATHDSHP) shows a compositional bias: basic and acidic residues. Residues 1334 to 1367 (PLPPSGPAQAPAPTPAPTQLPTPAPAPAPAPASG) are compositionally biased toward pro residues. An SH3-binding motif is present at residues 1334-1370 (PLPPSGPAQAPAPTPAPTQLPTPAPAPAPAPASGPGP). Serine 1384 bears the Phosphoserine mark.

Belongs to the neurexin family. In terms of assembly, interacts with CNTN1/contactin in cis form. Expressed in brain. In myelinated nerve fibers predominantly found in paranodal axoglial junctions. In the internodal region of myelinated axons in the CNS and the PNS also found as a thin line apposing the inner mesaxon of the myelin sheath. In PNS neurons this line forms a circumferential ring that apposes the innermost aspect of Schmidt-Lanterman incisures.

Its subcellular location is the membrane. It is found in the cell junction. The protein localises to the paranodal septate junction. Its function is as follows. Required, with CNTNAP2, for radial and longitudinal organization of myelinated axons. Plays a role in the formation of functional distinct domains critical for saltatory conduction of nerve impulses in myelinated nerve fibers. Demarcates the paranodal region of the axo-glial junction. In association with contactin involved in the signaling between axons and myelinating glial cells. In Mus musculus (Mouse), this protein is Contactin-associated protein 1 (Cntnap1).